We begin with the raw amino-acid sequence, 1126 residues long: NUT family member 1 (1126 aa).

Disordered stretches follow at residues methionine 1 to serine 56, isoleucine 334 to glutamate 367, glutamate 475 to alanine 515, glutamine 537 to serine 559, alanine 664 to glycine 692, alanine 755 to leucine 810, and glycine 932 to serine 1014. Over residues phenylalanine 30–phenylalanine 55 the composition is skewed to pro residues. The segment covering alanine 338 to glutamine 353 has biased composition (basic residues). Polar residues predominate over residues lysine 962 to arginine 975. Residue serine 973 is modified to Phosphoserine. The span at threonine 987–glutamate 1005 shows a compositional bias: basic and acidic residues. Phosphoserine occurs at positions 1022, 1025, and 1027. The segment at proline 1032–glutamine 1126 is disordered. Residue glutamine 1042 is modified to N5-methylglutamine. The span at proline 1106–glutamine 1126 shows a compositional bias: basic residues.

It belongs to the NUT family. Methylated at Gln-1042 by N6AMT1. In terms of processing, phosphorylation on Ser-1022, Ser-1025 or Ser-1027 is important for cytoplasmic export.

The protein resides in the cytoplasm. It localises to the nucleus. In terms of biological role, plays a role in the regulation of proliferation. Regulates TERT expression by modulating SP1 binding to TERT promoter binding sites. In Mus musculus (Mouse), this protein is NUT family member 1.